A 188-amino-acid chain; its full sequence is dCTP deaminase (188 aa).

Residues 111-116 (KSTYAR), 135-137 (TLE), Q156, Y170, and Q180 contribute to the dCTP site. Residue E137 is the Proton donor/acceptor of the active site.

This sequence belongs to the dCTP deaminase family. Homotrimer.

It catalyses the reaction dCTP + H2O + H(+) = dUTP + NH4(+). Its pathway is pyrimidine metabolism; dUMP biosynthesis; dUMP from dCTP (dUTP route): step 1/2. In terms of biological role, catalyzes the deamination of dCTP to dUTP. This chain is dCTP deaminase, found in Herminiimonas arsenicoxydans.